The primary structure comprises 617 residues: Type IV inositol polyphosphate 5-phosphatase 6 (617 aa).

2 disordered regions span residues 30 to 62 and 241 to 330; these read EFQA…KNTK and DFDP…VLYS. Low complexity predominate over residues 242-253; sequence FDPSFRGSSSSH. Over residues 254 to 290 the composition is skewed to basic and acidic residues; the sequence is RPSDYSRRPSDYSRRPSDYSRRPSDYSRRPSDSRPSD. The segment covering 291–311 has biased composition (low complexity); the sequence is YSRPSDYYSRPSDYSRPSDFS. Catalytic stretches follow at residues 458–473 and 538–553; these read DRVI…IALS and KRRT…WFGE.

The protein belongs to the inositol polyphosphate 5-phosphatase family. As to expression, broadly expressed in emerging organs. Mostly localized in procambium of growing organs. Restricted to vascular differentiating cells of young organs.

The catalysed reaction is a 1,2-diacyl-sn-glycero-3-phospho-(1D-myo-inositol-4,5-bisphosphate) + H2O = a 1,2-diacyl-sn-glycero-3-phospho-(1D-myo-inositol 4-phosphate) + phosphate. It carries out the reaction a 1,2-diacyl-sn-glycero-3-phospho-(1D-myo-inositol-3,4,5-trisphosphate) + H2O = a 1,2-diacyl-sn-glycero-3-phospho-(1D-myo-inositol-3,4-bisphosphate) + phosphate. In terms of biological role, has phosphatase activity toward PtdIns(4,5)P2 and PtdIns(3,4,5)P3. Required for the patterning of procambium and during the differentiation of vascular tissues. Acts before the acquisition of preprocambial identity. Seems to be also involved in the abscisic acid (ABA) signaling pathway. Acts redundantly with CVL1 for maintaining vascular continuity. Regulates phosphoinositide-dependent VAN3 localization. The sequence is that of Type IV inositol polyphosphate 5-phosphatase 6 from Arabidopsis thaliana (Mouse-ear cress).